The chain runs to 176 residues: Large ribosomal subunit protein uL10 (176 aa).

This sequence belongs to the universal ribosomal protein uL10 family. In terms of assembly, part of the ribosomal stalk of the 50S ribosomal subunit. The N-terminus interacts with L11 and the large rRNA to form the base of the stalk. The C-terminus forms an elongated spine to which L12 dimers bind in a sequential fashion forming a multimeric L10(L12)X complex.

Functionally, forms part of the ribosomal stalk, playing a central role in the interaction of the ribosome with GTP-bound translation factors. The polypeptide is Large ribosomal subunit protein uL10 (Sorangium cellulosum (strain So ce56) (Polyangium cellulosum (strain So ce56))).